A 420-amino-acid polypeptide reads, in one-letter code: Putative U-box domain-containing protein 58 (420 aa).

The region spanning 4 to 168 is the MIF4G domain; the sequence is NSYVLFARLC…EDALAMKKED (165 aa). Positions 139 to 352 form a coiled coil; the sequence is SRVVELEGNY…TAKEQMEKRQ (214 aa). One can recognise a U-box domain in the interval 352–420; that stretch reads QPPSSFFCPI…ALRSAIEELV (69 aa).

It catalyses the reaction S-ubiquitinyl-[E2 ubiquitin-conjugating enzyme]-L-cysteine + [acceptor protein]-L-lysine = [E2 ubiquitin-conjugating enzyme]-L-cysteine + N(6)-ubiquitinyl-[acceptor protein]-L-lysine.. It participates in protein modification; protein ubiquitination. Functionally, functions as an E3 ubiquitin ligase. The polypeptide is Putative U-box domain-containing protein 58 (PUB58) (Arabidopsis thaliana (Mouse-ear cress)).